The primary structure comprises 160 residues: Adenosine 5'-monophosphoramidase HINT3 (160 aa).

Positions 24–132 (IFCTIAKGDD…LAPYSQLYKW (109 aa)) constitute an HIT domain. AMP-binding positions include 50–51 (DI) and 119–121 (HLH). Residues 117 to 121 (HLHLH) carry the Histidine triad motif motif. H119 acts as the Tele-AMP-histidine intermediate in catalysis.

The protein belongs to the HINT family. As to quaternary structure, forms dimers to octamers and even larger oligomer.

The protein localises to the cytoplasm. Its subcellular location is the nucleus. The catalysed reaction is adenosine 5'-phosphoramidate + H2O = AMP + NH4(+). In terms of biological role, exhibits adenosine 5'-monophosphoramidase activity, hydrolyzing purine nucleotide phosphoramidates with a single phosphate group such as adenosine 5'monophosphoramidate (AMP-NH2) to yield AMP and NH2. Hydrolyzes lysyl-AMP (AMP-N-epsilon-(N-alpha-acetyl lysine methyl ester)) generated by lysine tRNA ligase. The protein is Adenosine 5'-monophosphoramidase HINT3 (hint3) of Danio rerio (Zebrafish).